The primary structure comprises 512 residues: Cytochrome P450 72A15 (512 aa).

A helical transmembrane segment spans residues 2–22 (EISVASVTISVVLAVVSWWIW). Residue Cys-460 participates in heme binding.

This sequence belongs to the cytochrome P450 family. It depends on heme as a cofactor.

It is found in the membrane. The protein is Cytochrome P450 72A15 (CYP72A15) of Arabidopsis thaliana (Mouse-ear cress).